The chain runs to 262 residues: Acyl-[acyl-carrier-protein]--UDP-N-acetylglucosamine O-acyltransferase (262 aa).

The protein belongs to the transferase hexapeptide repeat family. LpxA subfamily. In terms of assembly, homotrimer.

The protein localises to the cytoplasm. It carries out the reaction a (3R)-hydroxyacyl-[ACP] + UDP-N-acetyl-alpha-D-glucosamine = a UDP-3-O-[(3R)-3-hydroxyacyl]-N-acetyl-alpha-D-glucosamine + holo-[ACP]. It participates in glycolipid biosynthesis; lipid IV(A) biosynthesis; lipid IV(A) from (3R)-3-hydroxytetradecanoyl-[acyl-carrier-protein] and UDP-N-acetyl-alpha-D-glucosamine: step 1/6. Its function is as follows. Involved in the biosynthesis of lipid A, a phosphorylated glycolipid that anchors the lipopolysaccharide to the outer membrane of the cell. In Histophilus somni (strain 2336) (Haemophilus somnus), this protein is Acyl-[acyl-carrier-protein]--UDP-N-acetylglucosamine O-acyltransferase.